The sequence spans 502 residues: Alpha-globin transcription factor CP2 (502 aa).

The region spanning 63-300 (EILPFQYVLC…SPGFNSSHSS (238 aa)) is the Grh/CP2 DB domain. Residues 133-386 (EHQQLEGWRW…LFNALKGRMV (254 aa)) form a DNA-binding region. The segment covering 241–265 (KGADRKQKIDREKMEKRTPHEKEKY) has biased composition (basic and acidic residues). Disordered stretches follow at residues 241–268 (KGAD…YQPS) and 294–326 (FNSS…NLLP). Phosphoserine is present on Ser-353.

The protein belongs to the grh/CP2 family. CP2 subfamily. In terms of assembly, binds to DNA as a dimer. Interacts with UBP1 and PIAS1, and is probably part of a complex containing TFCP2, UBP1 and PIAS1. Component of the SSP (stage selector protein) complex, which appears to be a heteromer of TFCP2 and 2 copies of NFE4.

It is found in the nucleus. Functionally, binds a variety of cellular promoters including fibrinogen, alpha-globin promoters. Activation of the alpha-globin promoter in erythroid cells is via synergistic interaction with UBP1. Functions as part of the SSP (stage selector protein) complex. Facilitates the interaction of the gamma-globin genes with enhancer elements contained in the locus control region in fetal erythroid cells. Interacts by binding to the stage selector element (SSE) in the proximal gamma-globin promoter. The chain is Alpha-globin transcription factor CP2 (Tfcp2) from Mus musculus (Mouse).